We begin with the raw amino-acid sequence, 311 residues long: tRNA pseudouridine synthase B (311 aa).

His-43 lines the substrate pocket. The active-site Nucleophile is Asp-48. Positions 76, 179, and 200 each coordinate substrate.

This sequence belongs to the pseudouridine synthase TruB family. Type 1 subfamily.

The catalysed reaction is uridine(55) in tRNA = pseudouridine(55) in tRNA. In terms of biological role, responsible for synthesis of pseudouridine from uracil-55 in the psi GC loop of transfer RNAs. The chain is tRNA pseudouridine synthase B from Sodalis glossinidius (strain morsitans).